The primary structure comprises 94 residues: Small ribosomal subunit protein bS18 (94 aa).

Belongs to the bacterial ribosomal protein bS18 family. In terms of assembly, part of the 30S ribosomal subunit. Forms a tight heterodimer with protein bS6.

In terms of biological role, binds as a heterodimer with protein bS6 to the central domain of the 16S rRNA, where it helps stabilize the platform of the 30S subunit. The sequence is that of Small ribosomal subunit protein bS18 from Acetivibrio thermocellus (strain ATCC 27405 / DSM 1237 / JCM 9322 / NBRC 103400 / NCIMB 10682 / NRRL B-4536 / VPI 7372) (Clostridium thermocellum).